A 274-amino-acid chain; its full sequence is Mitochondrial outer membrane protein porin 3 (274 aa).

Ser-76 bears the Phosphoserine mark.

Belongs to the eukaryotic mitochondrial porin (TC 1.B.8.1) family. As to quaternary structure, interacts with KIN14F/KP1. Interacts with FBA6 and GAPC1. Expressed in leaf tips, anthers and stigma.

It is found in the cell membrane. The protein resides in the mitochondrion outer membrane. In terms of biological role, forms a channel through the mitochondrial outer membrane that allows diffusion of small hydrophilic molecules. The channel adopts an open conformation at low or zero membrane potential and a closed conformation at potentials above 30-40 mV. The open state has a weak anion selectivity whereas the closed state is cation-selective. This Arabidopsis thaliana (Mouse-ear cress) protein is Mitochondrial outer membrane protein porin 3 (VDAC3).